The primary structure comprises 656 residues: Ribosome quality control complex subunit 1 (656 aa).

The segment covering 1-11 has biased composition (basic residues); it reads MSSRALRKLQR. 3 disordered regions span residues 1–35, 51–122, and 634–656; these read MSSR…FSST, NNAI…LESS, and LFTS…GQGD. Acidic residues predominate over residues 17–32; it reads LLEEALDSESDEDDEF. Basic and acidic residues predominate over residues 51–63; sequence NNAINSEAEKSVS. Residues S56, S61, and S63 each carry the phosphoserine modification. Basic residues predominate over residues 83-101; the sequence is KKAKNKKKKKKQQKKKKVT. The span at 102 to 122 shows a compositional bias: basic and acidic residues; it reads GKRDLDNQSSDNEKLEGLESS. Phosphoserine occurs at positions 110 and 111.

It belongs to the TCF25 family. Component of the ribosome quality control complex (RQC), composed of the E3 ubiquitin ligase rkr1/ltn1, rqc1 and mtr1/rqc2, as well as cdc48 and its ubiquitin-binding cofactors. RQC forms a stable complex with 60S ribosomal subunits.

It is found in the cytoplasm. Functionally, component of the ribosome quality control complex (RQC), a ribosome-associated complex that mediates ubiquitination and extraction of incompletely synthesized nascent chains for proteasomal degradation. Within the RQC complex, rqc1 is essential for the recruitment of cdc48 to incompletely synthesized nascent polypeptides that are ubiquitinated by rkr1/ltn1. In Schizosaccharomyces pombe (strain 972 / ATCC 24843) (Fission yeast), this protein is Ribosome quality control complex subunit 1.